Reading from the N-terminus, the 155-residue chain is Probable cyclic pyranopterin monophosphate synthase (155 aa).

Residues 74 to 76 and 110 to 111 each bind substrate; these read MCH and ME. Asp125 is a catalytic residue.

Belongs to the MoaC family. In terms of assembly, homohexamer; trimer of dimers.

It catalyses the reaction (8S)-3',8-cyclo-7,8-dihydroguanosine 5'-triphosphate = cyclic pyranopterin phosphate + diphosphate. The protein operates within cofactor biosynthesis; molybdopterin biosynthesis. In terms of biological role, catalyzes the conversion of (8S)-3',8-cyclo-7,8-dihydroguanosine 5'-triphosphate to cyclic pyranopterin monophosphate (cPMP). This Methanoregula boonei (strain DSM 21154 / JCM 14090 / 6A8) protein is Probable cyclic pyranopterin monophosphate synthase.